The primary structure comprises 494 residues: Guanosine-5'-triphosphate,3'-diphosphate pyrophosphatase (494 aa).

Belongs to the GppA/Ppx family. GppA subfamily.

It catalyses the reaction guanosine 3'-diphosphate 5'-triphosphate + H2O = guanosine 3',5'-bis(diphosphate) + phosphate + H(+). Its pathway is purine metabolism; ppGpp biosynthesis; ppGpp from GTP: step 2/2. Catalyzes the conversion of pppGpp to ppGpp. Guanosine pentaphosphate (pppGpp) is a cytoplasmic signaling molecule which together with ppGpp controls the 'stringent response', an adaptive process that allows bacteria to respond to amino acid starvation, resulting in the coordinated regulation of numerous cellular activities. This Escherichia fergusonii (strain ATCC 35469 / DSM 13698 / CCUG 18766 / IAM 14443 / JCM 21226 / LMG 7866 / NBRC 102419 / NCTC 12128 / CDC 0568-73) protein is Guanosine-5'-triphosphate,3'-diphosphate pyrophosphatase.